Here is a 2254-residue protein sequence, read N- to C-terminus: Acetyl-CoA carboxylase 1 (2254 aa).

Residues 36–543 (PIHSILIANN…HTGWLDSRIA (508 aa)) enclose the Biotin carboxylation domain. The region spanning 189–381 (NSNLVTIPEE…LPAAQVAVGM (193 aa)) is the ATP-grasp domain. 215-272 (CQVVGYPAMIKASWGGGGKGIRKVHNDDEVRALFKQVQGEVPGSPIFIMKVASQSRHL) is a binding site for ATP. Glu-338, Glu-352, and Asn-354 together coordinate Mg(2+). Positions 338, 352, and 354 each coordinate Mn(2+). Residue Arg-356 is part of the active site. The region spanning 670–744 (LQNDHDPSKL…QAGELIANLD (75 aa)) is the Biotinyl-binding domain. Lys-711 carries the post-translational modification N6-biotinyllysine. Thr-1031 bears the Phosphothreonine mark. At Ser-1192 the chain carries Phosphoserine. The region spanning 1492–1831 (QYKPLGYLDR…YVGGPLPVLA (340 aa)) is the CoA carboxyltransferase N-terminal domain. Residues 1492-2150 (QYKPLGYLDR…ESSLVKNVRE (659 aa)) are carboxyltransferase. The CoA site is built by Arg-1740, Lys-2041, and Arg-2043. The 316-residue stretch at 1835 to 2150 (PPERIVEYVP…ESSLVKNVRE (316 aa)) folds into the CoA carboxyltransferase C-terminal domain.

In terms of assembly, homodimer. Requires biotin as cofactor. It depends on Mg(2+) as a cofactor. Mn(2+) serves as cofactor. Expressed in roots, trichomes, epidermal leaf cells, siliques, petals, anthers, and seeds.

The protein resides in the cytoplasm. Its subcellular location is the cytosol. It catalyses the reaction hydrogencarbonate + acetyl-CoA + ATP = malonyl-CoA + ADP + phosphate + H(+). The enzyme catalyses N(6)-biotinyl-L-lysyl-[protein] + hydrogencarbonate + ATP = N(6)-carboxybiotinyl-L-lysyl-[protein] + ADP + phosphate + H(+). It functions in the pathway lipid metabolism; malonyl-CoA biosynthesis; malonyl-CoA from acetyl-CoA: step 1/1. In terms of biological role, multifunctional enzyme that catalyzes the carboxylation of acetyl-CoA, forming malonyl-CoA, which is used in the plastid for fatty acid synthesis and in the cytosol in various biosynthetic pathways including fatty acid elongation. Required for very long chain fatty acids elongation. Necessary for embryo and plant development. Plays a central function in embryo morphogenesis, especially in apical meristem development. Involved in cell proliferation and tissue patterning. May act as a repressor of cytokinin response. This is Acetyl-CoA carboxylase 1 (ACC1) from Arabidopsis thaliana (Mouse-ear cress).